An 80-amino-acid polypeptide reads, in one-letter code: Small ribosomal subunit protein bS21 (80 aa).

Belongs to the bacterial ribosomal protein bS21 family.

The polypeptide is Small ribosomal subunit protein bS21 (Rhodospirillum rubrum (strain ATCC 11170 / ATH 1.1.1 / DSM 467 / LMG 4362 / NCIMB 8255 / S1)).